A 323-amino-acid polypeptide reads, in one-letter code: Palmitoyltransferase ZDHHC20-B (323 aa).

Residues 1 to 14 are Cytoplasmic-facing; the sequence is MAPTHVLRCCQRGL. Residues 15-35 form a helical membrane-spanning segment; the sequence is AWIPVIFIALVVCWSYYAYVV. Residues 36-41 lie on the Lumenal side of the membrane; the sequence is ELCLLV. The helical transmembrane segment at 42 to 62 threads the bilayer; the sequence is YLVVFHLSFVMFVWSYWKTIF. Residues 63-157 are Cytoplasmic-facing; the sequence is TKPANPSKEF…NNCVGFSNYK (95 aa). Residues 114–164 enclose the DHHC domain; that stretch reads RYCDRCQVIKPDRCHHCSACDMCVLKMDHHCPWVNNCVGFSNYKFFILFLT. The S-palmitoyl cysteine intermediate role is filled by C144. A helical transmembrane segment spans residues 158 to 178; the sequence is FFILFLTYSLVYCLFIAASVL. Over 179–195 the chain is Lumenal; sequence QYFIKFWTSDLPESHAK. The chain crosses the membrane as a helical span at residues 196 to 219; that stretch reads FHVLFLFFVAAMFCISILSLFTYH. The Cytoplasmic segment spans residues 220–323; that stretch reads LWLVGKNRST…KQAKKKKTDE (104 aa).

It belongs to the DHHC palmitoyltransferase family.

Its subcellular location is the golgi apparatus membrane. The protein localises to the cell membrane. It is found in the cytoplasm. It localises to the perinuclear region. The protein resides in the endoplasmic reticulum membrane. Its subcellular location is the endoplasmic reticulum-Golgi intermediate compartment membrane. The enzyme catalyses L-cysteinyl-[protein] + hexadecanoyl-CoA = S-hexadecanoyl-L-cysteinyl-[protein] + CoA. It catalyses the reaction L-cysteinyl-[protein] + tetradecanoyl-CoA = S-tetradecanoyl-L-cysteinyl-[protein] + CoA. It carries out the reaction L-cysteinyl-[protein] + octadecanoyl-CoA = S-octadecanoyl-L-cysteinyl-[protein] + CoA. Its function is as follows. Palmitoyltransferase that could catalyze the addition of palmitate onto various protein substrates. Catalyzes palmitoylation of Cys residues on protein substrates and has a preference for acyl-CoA with C16 fatty acid chains but may also utilize acyl-CoA with C14 and C18 fatty acid chains. The protein is Palmitoyltransferase ZDHHC20-B (zdhhc20b) of Danio rerio (Zebrafish).